The sequence spans 129 residues: Small ribosomal subunit protein uS11 (129 aa).

It belongs to the universal ribosomal protein uS11 family. In terms of assembly, part of the 30S ribosomal subunit. Interacts with proteins S7 and S18. Binds to IF-3.

Located on the platform of the 30S subunit, it bridges several disparate RNA helices of the 16S rRNA. Forms part of the Shine-Dalgarno cleft in the 70S ribosome. The sequence is that of Small ribosomal subunit protein uS11 from Photobacterium profundum (strain SS9).